The sequence spans 353 residues: Putative glycosyltransferase TagX (353 aa).

This sequence belongs to the glycosyltransferase 2 family.

This Staphylococcus aureus (strain MRSA252) protein is Putative glycosyltransferase TagX (tagX).